Consider the following 423-residue polypeptide: Histidine--tRNA ligase (423 aa).

It belongs to the class-II aminoacyl-tRNA synthetase family. As to quaternary structure, homodimer.

The protein resides in the cytoplasm. It catalyses the reaction tRNA(His) + L-histidine + ATP = L-histidyl-tRNA(His) + AMP + diphosphate + H(+). This chain is Histidine--tRNA ligase, found in Laribacter hongkongensis (strain HLHK9).